The following is a 569-amino-acid chain: Proline--tRNA ligase (569 aa).

It belongs to the class-II aminoacyl-tRNA synthetase family. ProS type 1 subfamily. In terms of assembly, homodimer.

The protein localises to the cytoplasm. The enzyme catalyses tRNA(Pro) + L-proline + ATP = L-prolyl-tRNA(Pro) + AMP + diphosphate. In terms of biological role, catalyzes the attachment of proline to tRNA(Pro) in a two-step reaction: proline is first activated by ATP to form Pro-AMP and then transferred to the acceptor end of tRNA(Pro). As ProRS can inadvertently accommodate and process non-cognate amino acids such as alanine and cysteine, to avoid such errors it has two additional distinct editing activities against alanine. One activity is designated as 'pretransfer' editing and involves the tRNA(Pro)-independent hydrolysis of activated Ala-AMP. The other activity is designated 'posttransfer' editing and involves deacylation of mischarged Ala-tRNA(Pro). The misacylated Cys-tRNA(Pro) is not edited by ProRS. The chain is Proline--tRNA ligase from Dehalococcoides mccartyi (strain CBDB1).